The chain runs to 343 residues: MTISVAVSGASGYAGGEVLRLLAGHPNVTIGAITAHSNAGSRLGELQPHLHGLASRILEDTTVENLSGHDVVFLALPHGASAEIAAQLPEGTVVIDAGADHRLQDAAAWERFYGSAHAGTWPYGLPELPGQREALKGATRIAVPGCYPTSALLALTPGFANNLLLTDDVVIVSASGTSGAGKAAKVNLIGAEVMGSMSPYGVGGGHRHTPEIEQGLSNAAGEPVTVSFTPTLVPMSRGILTTATAKVGHGVSYAELRQAWADAYDDEPFVHLLPEGQWPTTKSVQGSNHAVMQLAFDAHTGRVIVTCAIDNLTKGTAGGAVQSMNIALGLDETAGLNLQGVAP.

C146 is a catalytic residue.

Belongs to the NAGSA dehydrogenase family. Type 1 subfamily.

The protein resides in the cytoplasm. It catalyses the reaction N-acetyl-L-glutamate 5-semialdehyde + phosphate + NADP(+) = N-acetyl-L-glutamyl 5-phosphate + NADPH + H(+). It participates in amino-acid biosynthesis; L-arginine biosynthesis; N(2)-acetyl-L-ornithine from L-glutamate: step 3/4. Its function is as follows. Catalyzes the NADPH-dependent reduction of N-acetyl-5-glutamyl phosphate to yield N-acetyl-L-glutamate 5-semialdehyde. This Paenarthrobacter aurescens (strain TC1) protein is N-acetyl-gamma-glutamyl-phosphate reductase.